Consider the following 424-residue polypeptide: Enolase (424 aa).

Glutamine 162 lines the (2R)-2-phosphoglycerate pocket. The active-site Proton donor is the glutamate 204. Aspartate 241, glutamate 284, and aspartate 311 together coordinate Mg(2+). Residues lysine 336, arginine 365, serine 366, and lysine 387 each coordinate (2R)-2-phosphoglycerate. The active-site Proton acceptor is the lysine 336.

The protein belongs to the enolase family. It depends on Mg(2+) as a cofactor.

It is found in the cytoplasm. Its subcellular location is the secreted. The protein localises to the cell surface. It carries out the reaction (2R)-2-phosphoglycerate = phosphoenolpyruvate + H2O. It participates in carbohydrate degradation; glycolysis; pyruvate from D-glyceraldehyde 3-phosphate: step 4/5. Catalyzes the reversible conversion of 2-phosphoglycerate (2-PG) into phosphoenolpyruvate (PEP). It is essential for the degradation of carbohydrates via glycolysis. The sequence is that of Enolase from Rhizobium johnstonii (strain DSM 114642 / LMG 32736 / 3841) (Rhizobium leguminosarum bv. viciae).